A 469-amino-acid polypeptide reads, in one-letter code: Transcription factor phomD' (469 aa).

Positions 14-41 (CNACNESKVRCSQRKPTCARCERNGVEC) form a DNA-binding region, zn(2)-C6 fungal-type. The tract at residues 49–118 (THKDAPPISM…QQKDEAAAAA (70 aa)) is disordered. Residues 82–93 (KANSNSSSNWHM) are compositionally biased toward polar residues. Residues 104–118 (QQQQQQQKDEAAAAA) are compositionally biased toward low complexity.

It localises to the nucleus. In terms of biological role, transcription factor; part of the gene cluster that mediates the biosynthesis of the phomopsins, a group of hexapeptide mycotoxins which infects lupins and causes lupinosis disease in livestock. May play a role in the regulation of the production of phomopsins. This Diaporthe leptostromiformis (Lupinosis disease fungus) protein is Transcription factor phomD'.